Consider the following 261-residue polypeptide: CD40 ligand (261 aa).

The Cytoplasmic segment spans residues 1-22; it reads MIETYNQPSPRSAATGLPVRMK. Residues 23 to 43 form a helical; Signal-anchor for type II membrane protein membrane-spanning segment; the sequence is IFMYLLTIFLITQMIGSALFA. Over 44–261 the chain is Extracellular; the sequence is VYLHRRLDKI…GFTSFGLLKL (218 aa). Positions 122–261 constitute a THD domain; sequence IAAHVISEAS…GFTSFGLLKL (140 aa). Cysteine 178 and cysteine 218 are oxidised to a cystine. A glycan (N-linked (GlcNAc...) asparagine) is linked at asparagine 240.

This sequence belongs to the tumor necrosis factor family. Homotrimer. Interacts with CD28. CD40 ligand, soluble form: Exists as either a monomer or a homotrimer. Forms a ternary complex between CD40 and integrins for CD40-CD40LG signaling. In terms of processing, the soluble form derives from the membrane form by proteolytic processing.

Its subcellular location is the cell membrane. The protein localises to the cell surface. It localises to the secreted. Cytokine that acts as a ligand to CD40/TNFRSF5. Costimulates T-cell proliferation and cytokine production. Its cross-linking on T-cells generates a costimulatory signal which enhances the production of IL4 and IL10 in conjunction with the TCR/CD3 ligation and CD28 costimulation. Induces the activation of NF-kappa-B. Induces the activation of kinases MAPK8 and PAK2 in T-cells. Mediates B-cell proliferation in the absence of co-stimulus as well as IgE production in the presence of IL4. Involved in immunoglobulin class switching. Its function is as follows. Acts as a ligand for integrins, specifically ITGA5:ITGB1 and ITGAV:ITGB3; both integrins and the CD40 receptor are required for activation of CD40-CD40LG signaling, which have cell-type dependent effects, such as B-cell activation, NF-kappa-B signaling and anti-apoptotic signaling. In Cercocebus atys (Sooty mangabey), this protein is CD40 ligand (CD40LG).